Here is a 133-residue protein sequence, read N- to C-terminus: MKPSERRKARRLAVQAIYSWQLSKNNVADVEHEFITEQNIDGVDVAYFRELLAGVASKHEQIDDLLRPHLDRKFEDVSPVEKAIVRLAGYELTFRKDVPYKVAINEAIELAKAFGADDSHKFVNGLLDKLVRR.

It belongs to the NusB family.

Functionally, involved in transcription antitermination. Required for transcription of ribosomal RNA (rRNA) genes. Binds specifically to the boxA antiterminator sequence of the ribosomal RNA (rrn) operons. In Shewanella denitrificans (strain OS217 / ATCC BAA-1090 / DSM 15013), this protein is Transcription antitermination protein NusB.